A 258-amino-acid polypeptide reads, in one-letter code: MEEQGMGIRVEAMSPEYAHQATAWAERLGLPLQDDAAGFAVQVGADGLQIQQLGPQAPGPVRVDFVDGQAAHRRQFGGGNGQMIAKAVGIAQGVRPQVLDATAGLGKDAFVLASLGCQMTLIERQPLIAALLEDGLTRARSDDEVGPIVGRMRLLTGNAIERMRNWEGEAPQVIYLDPMFPHRDKSALVKKEMRVFRPLVGDDLDAPALLEAALALASHRVVVKRPRKAPIIDGPKPSHSLEGKSSRYDIYPKKALKA.

Residues 123-124 and Asp-177 each bind S-adenosyl-L-methionine; that span reads ER. The segment at 232–258 is disordered; sequence IDGPKPSHSLEGKSSRYDIYPKKALKA. The segment covering 239–252 has biased composition (basic and acidic residues); the sequence is HSLEGKSSRYDIYP.

Belongs to the methyltransferase superfamily. RsmJ family.

The protein localises to the cytoplasm. It carries out the reaction guanosine(1516) in 16S rRNA + S-adenosyl-L-methionine = N(2)-methylguanosine(1516) in 16S rRNA + S-adenosyl-L-homocysteine + H(+). In terms of biological role, specifically methylates the guanosine in position 1516 of 16S rRNA. The chain is Ribosomal RNA small subunit methyltransferase J from Pseudomonas putida (strain W619).